The following is a 480-amino-acid chain: 3-isopropylmalate dehydratase large subunit (480 aa).

Positions 361, 421, and 424 each coordinate [4Fe-4S] cluster.

This sequence belongs to the aconitase/IPM isomerase family. LeuC type 1 subfamily. In terms of assembly, heterodimer of LeuC and LeuD. The cofactor is [4Fe-4S] cluster.

The enzyme catalyses (2R,3S)-3-isopropylmalate = (2S)-2-isopropylmalate. The protein operates within amino-acid biosynthesis; L-leucine biosynthesis; L-leucine from 3-methyl-2-oxobutanoate: step 2/4. Its function is as follows. Catalyzes the isomerization between 2-isopropylmalate and 3-isopropylmalate, via the formation of 2-isopropylmaleate. The chain is 3-isopropylmalate dehydratase large subunit from Corynebacterium diphtheriae (strain ATCC 700971 / NCTC 13129 / Biotype gravis).